A 522-amino-acid polypeptide reads, in one-letter code: Tetratricopeptide repeat protein 39C (522 aa).

3 TPR repeats span residues 254–287 (SLFM…AVDQ), 292–325 (HVCL…SRWS), and 424–457 (GLKH…ESCR).

The protein belongs to the TTC39 family.

The polypeptide is Tetratricopeptide repeat protein 39C (Ttc39c) (Rattus norvegicus (Rat)).